A 313-amino-acid polypeptide reads, in one-letter code: tRNA dimethylallyltransferase (313 aa).

Residue 20-27 (GPTGTGKS) coordinates ATP. 22 to 27 (TGTGKS) provides a ligand contact to substrate.

Belongs to the IPP transferase family. Monomer. It depends on Mg(2+) as a cofactor.

It catalyses the reaction adenosine(37) in tRNA + dimethylallyl diphosphate = N(6)-dimethylallyladenosine(37) in tRNA + diphosphate. Its function is as follows. Catalyzes the transfer of a dimethylallyl group onto the adenine at position 37 in tRNAs that read codons beginning with uridine, leading to the formation of N6-(dimethylallyl)adenosine (i(6)A). In Kocuria rhizophila (strain ATCC 9341 / DSM 348 / NBRC 103217 / DC2201), this protein is tRNA dimethylallyltransferase.